The sequence spans 473 residues: Photosystem II CP43 reaction center protein (473 aa).

The propeptide occupies 1 to 14; it reads MKTLYSLRRFYPVE. Residue Thr15 is modified to N-acetylthreonine. Thr15 bears the Phosphothreonine mark. 5 helical membrane-spanning segments follow: residues 69–93, 134–155, 178–200, 255–275, and 291–312; these read LFEVAHFVPEKPMYEQGLILLPHLA, LLGPETLEESFPFFGYVWKDRN, KALYFGGVYDTWAPGGGDVRKIT, KPFAWARRAFVWSGEAYLSYS, and WFNNTAYPSEFYGPTGPEASQA. Glu367 is a binding site for [CaMn4O5] cluster. A helical membrane pass occupies residues 447–471; sequence RARAAAAGFEKGIDRDFEPVLSMTP.

This sequence belongs to the PsbB/PsbC family. PsbC subfamily. In terms of assembly, PSII is composed of 1 copy each of membrane proteins PsbA, PsbB, PsbC, PsbD, PsbE, PsbF, PsbH, PsbI, PsbJ, PsbK, PsbL, PsbM, PsbT, PsbX, PsbY, PsbZ, Psb30/Ycf12, at least 3 peripheral proteins of the oxygen-evolving complex and a large number of cofactors. It forms dimeric complexes. Requires Binds multiple chlorophylls and provides some of the ligands for the Ca-4Mn-5O cluster of the oxygen-evolving complex. It may also provide a ligand for a Cl- that is required for oxygen evolution. PSII binds additional chlorophylls, carotenoids and specific lipids. as cofactor.

It localises to the plastid. The protein resides in the chloroplast thylakoid membrane. One of the components of the core complex of photosystem II (PSII). It binds chlorophyll and helps catalyze the primary light-induced photochemical processes of PSII. PSII is a light-driven water:plastoquinone oxidoreductase, using light energy to abstract electrons from H(2)O, generating O(2) and a proton gradient subsequently used for ATP formation. The polypeptide is Photosystem II CP43 reaction center protein (Amborella trichopoda).